The chain runs to 177 residues: Bifunctional protein PyrR (177 aa).

The PRPP-binding motif lies at 99-111 (VVLVDDVLYTGRT).

This sequence belongs to the purine/pyrimidine phosphoribosyltransferase family. PyrR subfamily.

It catalyses the reaction UMP + diphosphate = 5-phospho-alpha-D-ribose 1-diphosphate + uracil. In terms of biological role, regulates the transcription of the pyrimidine nucleotide (pyr) operon in response to exogenous pyrimidines. Functionally, also displays a weak uracil phosphoribosyltransferase activity which is not physiologically significant. The chain is Bifunctional protein PyrR from Akkermansia muciniphila (strain ATCC BAA-835 / DSM 22959 / JCM 33894 / BCRC 81048 / CCUG 64013 / CIP 107961 / Muc).